The primary structure comprises 400 residues: Dual specificity mitogen-activated protein kinase kinase 2 (400 aa).

The residue at position 1 (methionine 1) is an N-acetylmethionine. Residue serine 23 is modified to Phosphoserine. A Protein kinase domain is found at 72-369 (FERISELGAG…LKMLMSHTFI (298 aa)). Residues 78 to 86 (LGAGNGGVV) and lysine 101 contribute to the ATP site. Aspartate 194 functions as the Proton acceptor in the catalytic mechanism. Serine 222 is subject to Phosphoserine; by RAF. Phosphoserine occurs at positions 226, 293, 295, and 306. The disordered stretch occupies residues 288 to 309 (EGEPHSISPRPRPPGRPISGHG). Residues threonine 394 and threonine 396 each carry the phosphothreonine modification.

The protein belongs to the protein kinase superfamily. STE Ser/Thr protein kinase family. MAP kinase kinase subfamily. Interacts with MORG1. Interacts with SGK1. Interacts with KSR1. Interacts with KSR1 and BRAF; the interaction with KSR1 mediates KSR1-BRAF dimerization. Interacts with GLS. Mg(2+) is required as a cofactor. In terms of processing, MAPKK is itself dependent on Ser/Thr phosphorylation for activity catalyzed by MAP kinase kinase kinases (RAF or MEKK1).

It is found in the cytoplasm. It localises to the membrane. The catalysed reaction is L-seryl-[protein] + ATP = O-phospho-L-seryl-[protein] + ADP + H(+). It carries out the reaction L-threonyl-[protein] + ATP = O-phospho-L-threonyl-[protein] + ADP + H(+). The enzyme catalyses L-tyrosyl-[protein] + ATP = O-phospho-L-tyrosyl-[protein] + ADP + H(+). Functionally, catalyzes the concomitant phosphorylation of a threonine and a tyrosine residue in a Thr-Glu-Tyr sequence located in MAP kinases. Activates the ERK1 and ERK2 MAP kinases. Activates BRAF in a KSR1 or KSR2-dependent manner; by binding to KSR1 or KSR2 releases the inhibitory intramolecular interaction between KSR1 or KSR2 protein kinase and N-terminal domains which promotes KSR1 or KSR2-BRAF dimerization and BRAF activation. This is Dual specificity mitogen-activated protein kinase kinase 2 (MAP2K2) from Canis lupus familiaris (Dog).